A 178-amino-acid chain; its full sequence is Large ribosomal subunit protein uL5 (178 aa).

Belongs to the universal ribosomal protein uL5 family. As to quaternary structure, part of the 50S ribosomal subunit; part of the 5S rRNA/L5/L18/L25 subcomplex. Contacts the 5S rRNA and the P site tRNA. Forms a bridge to the 30S subunit in the 70S ribosome.

Functionally, this is one of the proteins that bind and probably mediate the attachment of the 5S RNA into the large ribosomal subunit, where it forms part of the central protuberance. In the 70S ribosome it contacts protein S13 of the 30S subunit (bridge B1b), connecting the 2 subunits; this bridge is implicated in subunit movement. Contacts the P site tRNA; the 5S rRNA and some of its associated proteins might help stabilize positioning of ribosome-bound tRNAs. The protein is Large ribosomal subunit protein uL5 of Acinetobacter baumannii (strain AB0057).